Consider the following 307-residue polypeptide: tRNA-cytidine(32) 2-sulfurtransferase (307 aa).

Residues 44–49 carry the PP-loop motif motif; that stretch reads SGGKDS. [4Fe-4S] cluster contacts are provided by Cys119, Cys122, and Cys210.

This sequence belongs to the TtcA family. Homodimer. It depends on Mg(2+) as a cofactor. [4Fe-4S] cluster serves as cofactor.

It localises to the cytoplasm. The enzyme catalyses cytidine(32) in tRNA + S-sulfanyl-L-cysteinyl-[cysteine desulfurase] + AH2 + ATP = 2-thiocytidine(32) in tRNA + L-cysteinyl-[cysteine desulfurase] + A + AMP + diphosphate + H(+). The protein operates within tRNA modification. In terms of biological role, catalyzes the ATP-dependent 2-thiolation of cytidine in position 32 of tRNA, to form 2-thiocytidine (s(2)C32). The sulfur atoms are provided by the cysteine/cysteine desulfurase (IscS) system. This Aliivibrio salmonicida (strain LFI1238) (Vibrio salmonicida (strain LFI1238)) protein is tRNA-cytidine(32) 2-sulfurtransferase.